A 201-amino-acid polypeptide reads, in one-letter code: FMN-dependent NADH:quinone oxidoreductase (201 aa).

Residues S10, 16 to 18 (SQS), 96 to 99 (MYNF), and 140 to 143 (SRGG) each bind FMN.

It belongs to the azoreductase type 1 family. As to quaternary structure, homodimer. The cofactor is FMN.

It carries out the reaction 2 a quinone + NADH + H(+) = 2 a 1,4-benzosemiquinone + NAD(+). It catalyses the reaction N,N-dimethyl-1,4-phenylenediamine + anthranilate + 2 NAD(+) = 2-(4-dimethylaminophenyl)diazenylbenzoate + 2 NADH + 2 H(+). Functionally, quinone reductase that provides resistance to thiol-specific stress caused by electrophilic quinones. Also exhibits azoreductase activity. Catalyzes the reductive cleavage of the azo bond in aromatic azo compounds to the corresponding amines. The protein is FMN-dependent NADH:quinone oxidoreductase of Salmonella choleraesuis (strain SC-B67).